A 508-amino-acid chain; its full sequence is Protein S-acyltransferase 18 (508 aa).

Transmembrane regions (helical) follow at residues 17 to 37 (IVGA…LGFF) and 42 to 62 (IAVI…IVLF). The DHHC domain occupies 158–208 (SYCSLCDLEVKRSSKHCRTCNRCVEGFDHHCRWLNNCVGKKNYTTFILLMV). The S-palmitoyl cysteine intermediate role is filled by C188. The next 2 membrane-spanning stretches (helical) occupy residues 203–223 (FILL…TALA) and 250–270 (WALA…SAAM). Residues 443-468 (VSPGRFSSPRRRFSGSSSSTVPSPKQ) are disordered. Over residues 456-466 (SGSSSSTVPSP) the composition is skewed to low complexity.

Belongs to the DHHC palmitoyltransferase family.

The protein resides in the endoplasmic reticulum membrane. Its subcellular location is the cytoplasmic vesicle membrane. It catalyses the reaction L-cysteinyl-[protein] + hexadecanoyl-CoA = S-hexadecanoyl-L-cysteinyl-[protein] + CoA. In terms of biological role, S-acyltransferase involved in protein lipid modification. The polypeptide is Protein S-acyltransferase 18 (PAT18) (Arabidopsis thaliana (Mouse-ear cress)).